Reading from the N-terminus, the 201-residue chain is Aminoglycoside N(6')-acetyltransferase type 1 (201 aa).

Residues 25–192 (VTLRLMTEHD…PAVYMVQTRQ (168 aa)) enclose the N-acetyltransferase domain. 2 residues coordinate substrate: Trp-51 and Asp-154. Asn-159 provides a ligand contact to acetyl-CoA.

In terms of assembly, homodimer.

It carries out the reaction kanamycin B + acetyl-CoA = N(6')-acetylkanamycin B + CoA + H(+). Functionally, catalyzes the transfer of an acetyl group from acetyl-CoA to the 6'-amino group of aminoglycoside molecules conferring resistance to antibiotics containing the purpurosamine ring including amikacin. This chain is Aminoglycoside N(6')-acetyltransferase type 1 (aacA4), found in Klebsiella pneumoniae.